Here is a 210-residue protein sequence, read N- to C-terminus: 3-hydroxy-3-methylglutaryl-coenzyme A reductase 2 (210 aa).

Residues K21 and D97 each act as charge relay system in the active site. A helical membrane pass occupies residues 166–186 (LLATIVAGSVLAGELSLMSAI). H195 functions as the Proton donor in the catalytic mechanism. The N-linked (GlcNAc...) asparagine glycan is linked to N199.

This sequence belongs to the HMG-CoA reductase family.

It is found in the endoplasmic reticulum membrane. Its subcellular location is the mitochondrion membrane. The protein resides in the plastid membrane. The catalysed reaction is (R)-mevalonate + 2 NADP(+) + CoA = (3S)-3-hydroxy-3-methylglutaryl-CoA + 2 NADPH + 2 H(+). It participates in metabolic intermediate biosynthesis; (R)-mevalonate biosynthesis; (R)-mevalonate from acetyl-CoA: step 3/3. In terms of biological role, catalyzes the synthesis of mevalonate. The specific precursor of all isoprenoid compounds present in plants. This is 3-hydroxy-3-methylglutaryl-coenzyme A reductase 2 (HMGR2) from Hevea brasiliensis (Para rubber tree).